A 149-amino-acid chain; its full sequence is 3-dehydroquinate dehydratase (149 aa).

The active-site Proton acceptor is Y22. Substrate-binding residues include N74, H80, and D87. H100 acts as the Proton donor in catalysis. Residues 101 to 102 (LS) and R111 contribute to the substrate site.

It belongs to the type-II 3-dehydroquinase family. As to quaternary structure, homododecamer.

It carries out the reaction 3-dehydroquinate = 3-dehydroshikimate + H2O. It participates in metabolic intermediate biosynthesis; chorismate biosynthesis; chorismate from D-erythrose 4-phosphate and phosphoenolpyruvate: step 3/7. In terms of biological role, catalyzes a trans-dehydration via an enolate intermediate. The polypeptide is 3-dehydroquinate dehydratase (Vesicomyosocius okutanii subsp. Calyptogena okutanii (strain HA)).